The primary structure comprises 86 residues: Large ribosomal subunit protein uL23 (86 aa).

The protein belongs to the universal ribosomal protein uL23 family. As to quaternary structure, part of the 50S ribosomal subunit. Contacts protein L29.

Functionally, binds to 23S rRNA. One of the proteins that surrounds the polypeptide exit tunnel on the outside of the ribosome. This Methanococcus maripaludis (strain C6 / ATCC BAA-1332) protein is Large ribosomal subunit protein uL23.